The sequence spans 63 residues: Cecropin-A2 (63 aa).

Positions 1–23 are cleaved as a signal peptide; it reads MNFYNIFVFVALILAITIGQSEA. Arg-62 is modified (arginine amide).

It belongs to the cecropin family. In terms of tissue distribution, strongly expressed in larval, pupal and adult fat body and hemocytes after injection of bacteria. Maximal expression in the adult involves fat body cells of the head, thorax and abdomen.

The protein localises to the secreted. Its function is as follows. Cecropins have lytic and antibacterial activity against several Gram-positive and Gram-negative bacteria. This Drosophila melanogaster (Fruit fly) protein is Cecropin-A2.